The following is a 334-amino-acid chain: Succinylglutamate desuccinylase (334 aa).

H59, E62, and H151 together coordinate Zn(2+). The active site involves E215.

This sequence belongs to the AspA/AstE family. Succinylglutamate desuccinylase subfamily. It depends on Zn(2+) as a cofactor.

It carries out the reaction N-succinyl-L-glutamate + H2O = L-glutamate + succinate. It participates in amino-acid degradation; L-arginine degradation via AST pathway; L-glutamate and succinate from L-arginine: step 5/5. Transforms N(2)-succinylglutamate into succinate and glutamate. The chain is Succinylglutamate desuccinylase from Pseudomonas fluorescens (strain SBW25).